Consider the following 218-residue polypeptide: Adenylate kinase (218 aa).

Position 10–15 (10–15) interacts with ATP; the sequence is GAGKGT. The NMP stretch occupies residues 30-59; the sequence is STGDMFRAAMADQTDLGVKAKAFIDKGELV. AMP contacts are provided by residues Thr31, Arg36, 57 to 59, 85 to 88, and Gln92; these read ELV and GFPR. Positions 126–164 are LID; sequence GRFICKTCGATYHKLYHPTQVEGTCDRCGGHVFFQREDD. Arg127 contributes to the ATP binding site. Positions 130 and 133 each coordinate Zn(2+). An ATP-binding site is contributed by 136–137; sequence TY. Residues Cys150 and Cys153 each contribute to the Zn(2+) site. The AMP site is built by Arg161 and Arg172. Gln200 is a binding site for ATP.

Belongs to the adenylate kinase family. Monomer.

It is found in the cytoplasm. The catalysed reaction is AMP + ATP = 2 ADP. It participates in purine metabolism; AMP biosynthesis via salvage pathway; AMP from ADP: step 1/1. Its function is as follows. Catalyzes the reversible transfer of the terminal phosphate group between ATP and AMP. Plays an important role in cellular energy homeostasis and in adenine nucleotide metabolism. The chain is Adenylate kinase from Latilactobacillus sakei subsp. sakei (strain 23K) (Lactobacillus sakei subsp. sakei).